Reading from the N-terminus, the 381-residue chain is Cytochrome b (381 aa).

The next 4 helical transmembrane spans lie at F34–M54, W78–I99, W114–L134, and F179–L199. Heme b-binding residues include H84 and H98. Heme b-binding residues include H183 and H197. H202 serves as a coordination point for a ubiquinone. Helical transmembrane passes span Y227 to M247, L289 to H309, L321 to G341, and F348 to P368.

Belongs to the cytochrome b family. As to quaternary structure, the cytochrome bc1 complex contains 3 respiratory subunits (MT-CYB, CYC1 and UQCRFS1), 2 core proteins (UQCRC1 and UQCRC2) and probably 6 low-molecular weight proteins. Heme b is required as a cofactor.

Its subcellular location is the mitochondrion inner membrane. Component of the ubiquinol-cytochrome c reductase complex (complex III or cytochrome b-c1 complex) that is part of the mitochondrial respiratory chain. The b-c1 complex mediates electron transfer from ubiquinol to cytochrome c. Contributes to the generation of a proton gradient across the mitochondrial membrane that is then used for ATP synthesis. This Sphyrna lewini (Scalloped hammerhead shark) protein is Cytochrome b (mt-cyb).